The sequence spans 1122 residues: Maestro heat-like repeat-containing protein family member 7 (1122 aa).

Disordered regions lie at residues Met-1–Asp-144 and Ser-183–Leu-203. Low complexity predominate over residues Thr-33–Pro-65. 3 stretches are compositionally biased toward polar residues: residues Asp-75–Ala-95, Pro-120–Asn-136, and His-184–Leu-203. Residues Asn-200, Asn-210, Asn-255, Asn-267, and Asn-296 are each glycosylated (N-linked (GlcNAc...) asparagine). Residues Trp-246–Gly-265 form a disordered region. A Phosphoserine modification is found at Ser-356. The disordered stretch occupies residues Phe-363–Asp-385. A compositionally biased stretch (basic and acidic residues) spans Glu-372 to Asp-385. Residues Asn-541 and Asn-546 are each glycosylated (N-linked (GlcNAc...) asparagine). Helical transmembrane passes span Thr-548 to Gly-568 and Leu-722 to Met-742. HEAT repeat units follow at residues Gln-913–Val-950, Thr-992–Lys-1029, Ser-1035–Met-1072, and Glu-1080–Leu-1117.

The protein localises to the membrane. The polypeptide is Maestro heat-like repeat-containing protein family member 7 (Mroh7) (Rattus norvegicus (Rat)).